Here is a 124-residue protein sequence, read N- to C-terminus: Fluoride-specific ion channel FluC 2 (124 aa).

Transmembrane regions (helical) follow at residues 9 to 29 (LGIF…STWL), 34 to 54 (DFPW…IYLV), 67 to 87 (LILA…SLML), and 99 to 119 (LSLI…AYYL). Residues Gly-77 and Thr-80 each coordinate Na(+).

This sequence belongs to the fluoride channel Fluc/FEX (TC 1.A.43) family.

Its subcellular location is the cell membrane. The enzyme catalyses fluoride(in) = fluoride(out). Its activity is regulated as follows. Na(+) is not transported, but it plays an essential structural role and its presence is essential for fluoride channel function. Its function is as follows. Fluoride-specific ion channel. Important for reducing fluoride concentration in the cell, thus reducing its toxicity. This is Fluoride-specific ion channel FluC 2 from Streptococcus pneumoniae serotype 4 (strain ATCC BAA-334 / TIGR4).